The sequence spans 494 residues: Beta-glucosidase 29 (494 aa).

The signal sequence occupies residues 1–28; the sequence is MAWLGIGMGRQIVPVLVFVAVLCSGVDA. Glutamine 49 provides a ligand contact to a beta-D-glucoside. N-linked (GlcNAc...) asparagine glycosylation is present at asparagine 103. A beta-D-glucoside-binding positions include histidine 138 and 183–184; that span reads NE. The Proton donor role is filled by glutamate 184. A disulfide bond links cysteine 203 and cysteine 211. An N-linked (GlcNAc...) asparagine glycan is attached at asparagine 263. Tyrosine 327 serves as a coordination point for a beta-D-glucoside. Asparagine 352 is a glycosylation site (N-linked (GlcNAc...) asparagine). Glutamate 398 provides a ligand contact to a beta-D-glucoside. Glutamate 398 acts as the Nucleophile in catalysis. Residue asparagine 406 is glycosylated (N-linked (GlcNAc...) asparagine). Residues tryptophan 447, 454 to 455, and phenylalanine 463 contribute to the a beta-D-glucoside site; that span reads EW.

Belongs to the glycosyl hydrolase 1 family.

It catalyses the reaction Hydrolysis of terminal, non-reducing beta-D-glucosyl residues with release of beta-D-glucose.. The polypeptide is Beta-glucosidase 29 (BGLU29) (Oryza sativa subsp. japonica (Rice)).